Here is a 473-residue protein sequence, read N- to C-terminus: Cysteine--tRNA ligase (473 aa).

Residue Cys30 participates in Zn(2+) binding. The short motif at 32-42 (MTVYDYCHIGH) is the 'HIGH' region element. Zn(2+) is bound by residues Cys213, His238, and Glu242. Residues 270–274 (KMSKS) carry the 'KMSKS' region motif. Residue Lys273 participates in ATP binding.

Belongs to the class-I aminoacyl-tRNA synthetase family. In terms of assembly, monomer. It depends on Zn(2+) as a cofactor.

It localises to the cytoplasm. The catalysed reaction is tRNA(Cys) + L-cysteine + ATP = L-cysteinyl-tRNA(Cys) + AMP + diphosphate. This chain is Cysteine--tRNA ligase, found in Acinetobacter baylyi (strain ATCC 33305 / BD413 / ADP1).